The following is a 456-amino-acid chain: Bifunctional protein GlmU (456 aa).

The pyrophosphorylase stretch occupies residues 1–228 (MPQNTLNIVI…SYLAAGVNNK (228 aa)). UDP-N-acetyl-alpha-D-glucosamine-binding positions include 11–14 (LAAG), lysine 25, glutamine 75, 80–81 (GT), 102–104 (YGD), glycine 138, glutamate 153, asparagine 168, and asparagine 226. A Mg(2+)-binding site is contributed by aspartate 104. Asparagine 226 contributes to the Mg(2+) binding site. Residues 229–249 (LQLAELERIFQTEQAQELLKA) are linker. The segment at 250-456 (GVTLSDPARF…GWVRPEKDKQ (207 aa)) is N-acetyltransferase. Residues arginine 332 and lysine 350 each coordinate UDP-N-acetyl-alpha-D-glucosamine. Histidine 362 serves as the catalytic Proton acceptor. UDP-N-acetyl-alpha-D-glucosamine-binding residues include tyrosine 365 and asparagine 376. Acetyl-CoA contacts are provided by residues alanine 379, 385-386 (NY), serine 404, alanine 422, and arginine 439.

In the N-terminal section; belongs to the N-acetylglucosamine-1-phosphate uridyltransferase family. The protein in the C-terminal section; belongs to the transferase hexapeptide repeat family. As to quaternary structure, homotrimer. The cofactor is Mg(2+).

Its subcellular location is the cytoplasm. It carries out the reaction alpha-D-glucosamine 1-phosphate + acetyl-CoA = N-acetyl-alpha-D-glucosamine 1-phosphate + CoA + H(+). It catalyses the reaction N-acetyl-alpha-D-glucosamine 1-phosphate + UTP + H(+) = UDP-N-acetyl-alpha-D-glucosamine + diphosphate. The protein operates within nucleotide-sugar biosynthesis; UDP-N-acetyl-alpha-D-glucosamine biosynthesis; N-acetyl-alpha-D-glucosamine 1-phosphate from alpha-D-glucosamine 6-phosphate (route II): step 2/2. Its pathway is nucleotide-sugar biosynthesis; UDP-N-acetyl-alpha-D-glucosamine biosynthesis; UDP-N-acetyl-alpha-D-glucosamine from N-acetyl-alpha-D-glucosamine 1-phosphate: step 1/1. It participates in bacterial outer membrane biogenesis; LPS lipid A biosynthesis. Its function is as follows. Catalyzes the last two sequential reactions in the de novo biosynthetic pathway for UDP-N-acetylglucosamine (UDP-GlcNAc). The C-terminal domain catalyzes the transfer of acetyl group from acetyl coenzyme A to glucosamine-1-phosphate (GlcN-1-P) to produce N-acetylglucosamine-1-phosphate (GlcNAc-1-P), which is converted into UDP-GlcNAc by the transfer of uridine 5-monophosphate (from uridine 5-triphosphate), a reaction catalyzed by the N-terminal domain. This chain is Bifunctional protein GlmU, found in Neisseria meningitidis serogroup C / serotype 2a (strain ATCC 700532 / DSM 15464 / FAM18).